An 80-amino-acid chain; its full sequence is Teretoxin Tsu6.5 (80 aa).

A signal peptide spans 1-21; sequence MAINGRLLCLCLVLGLVFESL. Residues 22-42 constitute a propeptide that is removed on maturation; sequence GHPSVQEKRAAEDSKPSGERR.

Belongs to the teretoxin M (TM) superfamily. Post-translationally, contains 3 disulfide bonds. In terms of tissue distribution, expressed by the venom duct.

The protein resides in the secreted. The sequence is that of Teretoxin Tsu6.5 from Terebra subulata (Chocolate spotted auger).